We begin with the raw amino-acid sequence, 166 residues long: Small ribosomal subunit protein uS5 (166 aa).

The region spanning 12-75 (YIEKLVQVNR…EAARRNMIQV (64 aa)) is the S5 DRBM domain.

It belongs to the universal ribosomal protein uS5 family. Part of the 30S ribosomal subunit. Contacts proteins S4 and S8.

Its function is as follows. With S4 and S12 plays an important role in translational accuracy. In terms of biological role, located at the back of the 30S subunit body where it stabilizes the conformation of the head with respect to the body. In Pseudomonas savastanoi pv. phaseolicola (strain 1448A / Race 6) (Pseudomonas syringae pv. phaseolicola (strain 1448A / Race 6)), this protein is Small ribosomal subunit protein uS5.